The sequence spans 123 residues: Ribosome-binding factor A (123 aa).

Belongs to the RbfA family. As to quaternary structure, monomer. Binds 30S ribosomal subunits, but not 50S ribosomal subunits or 70S ribosomes.

The protein resides in the cytoplasm. Functionally, one of several proteins that assist in the late maturation steps of the functional core of the 30S ribosomal subunit. Associates with free 30S ribosomal subunits (but not with 30S subunits that are part of 70S ribosomes or polysomes). Required for efficient processing of 16S rRNA. May interact with the 5'-terminal helix region of 16S rRNA. In Trichlorobacter lovleyi (strain ATCC BAA-1151 / DSM 17278 / SZ) (Geobacter lovleyi), this protein is Ribosome-binding factor A.